Here is a 421-residue protein sequence, read N- to C-terminus: Probable acid phosphatase (421 aa).

Aspartate 229 functions as the Proton donor in the catalytic mechanism.

The catalysed reaction is a phosphate monoester + H2O = an alcohol + phosphate. The protein is Probable acid phosphatase of Kluyveromyces lactis (strain ATCC 8585 / CBS 2359 / DSM 70799 / NBRC 1267 / NRRL Y-1140 / WM37) (Yeast).